A 209-amino-acid chain; its full sequence is Protein-L-isoaspartate O-methyltransferase (209 aa).

Ser60 is a catalytic residue.

Belongs to the methyltransferase superfamily. L-isoaspartyl/D-aspartyl protein methyltransferase family.

It localises to the cytoplasm. The enzyme catalyses [protein]-L-isoaspartate + S-adenosyl-L-methionine = [protein]-L-isoaspartate alpha-methyl ester + S-adenosyl-L-homocysteine. Catalyzes the methyl esterification of L-isoaspartyl residues in peptides and proteins that result from spontaneous decomposition of normal L-aspartyl and L-asparaginyl residues. It plays a role in the repair and/or degradation of damaged proteins. This chain is Protein-L-isoaspartate O-methyltransferase, found in Photobacterium profundum (strain SS9).